We begin with the raw amino-acid sequence, 701 residues long: Ribosomal RNA large subunit methyltransferase K/L (701 aa).

One can recognise a THUMP domain in the interval 44 to 155; it reads QAYKICLWSR…SDKLTVYLDL (112 aa).

The protein belongs to the methyltransferase superfamily. RlmKL family.

Its subcellular location is the cytoplasm. It carries out the reaction guanosine(2445) in 23S rRNA + S-adenosyl-L-methionine = N(2)-methylguanosine(2445) in 23S rRNA + S-adenosyl-L-homocysteine + H(+). The catalysed reaction is guanosine(2069) in 23S rRNA + S-adenosyl-L-methionine = N(2)-methylguanosine(2069) in 23S rRNA + S-adenosyl-L-homocysteine + H(+). Functionally, specifically methylates the guanine in position 2445 (m2G2445) and the guanine in position 2069 (m7G2069) of 23S rRNA. The polypeptide is Ribosomal RNA large subunit methyltransferase K/L (Pseudoalteromonas atlantica (strain T6c / ATCC BAA-1087)).